Consider the following 333-residue polypeptide: 5-formaminoimidazole-4-carboxamide-1-(beta)-D-ribofuranosyl 5'-monophosphate synthetase (333 aa).

Residues H20 and S85 each contribute to the 5-amino-1-(5-phospho-beta-D-ribosyl)imidazole-4-carboxamide site. One can recognise an ATP-grasp domain in the interval 106-313 (RELIKWEADQ…YFDRPMDMGE (208 aa)). ATP-binding positions include 136-187 (PEEV…VPAY) and E209. 5-amino-1-(5-phospho-beta-D-ribosyl)imidazole-4-carboxamide is bound at residue N229. Mg(2+) contacts are provided by E268 and E281.

This sequence belongs to the phosphohexose mutase family. Mg(2+) is required as a cofactor. It depends on Mn(2+) as a cofactor.

It carries out the reaction 5-amino-1-(5-phospho-beta-D-ribosyl)imidazole-4-carboxamide + formate + ATP = 5-formamido-1-(5-phospho-D-ribosyl)imidazole-4-carboxamide + ADP + phosphate. It participates in purine metabolism; IMP biosynthesis via de novo pathway; 5-formamido-1-(5-phospho-D-ribosyl)imidazole-4-carboxamide from 5-amino-1-(5-phospho-D-ribosyl)imidazole-4-carboxamide (formate route): step 1/1. Catalyzes the ATP- and formate-dependent formylation of 5-aminoimidazole-4-carboxamide-1-beta-d-ribofuranosyl 5'-monophosphate (AICAR) to 5-formaminoimidazole-4-carboxamide-1-beta-d-ribofuranosyl 5'-monophosphate (FAICAR) in the absence of folates. The protein is 5-formaminoimidazole-4-carboxamide-1-(beta)-D-ribofuranosyl 5'-monophosphate synthetase of Pyrobaculum islandicum (strain DSM 4184 / JCM 9189 / GEO3).